Here is a 486-residue protein sequence, read N- to C-terminus: Glutamyl-tRNA(Gln) amidotransferase subunit A (486 aa).

Residues Lys-79 and Ser-154 each act as charge relay system in the active site. Catalysis depends on Ser-178, which acts as the Acyl-ester intermediate.

This sequence belongs to the amidase family. GatA subfamily. As to quaternary structure, heterotrimer of A, B and C subunits.

It carries out the reaction L-glutamyl-tRNA(Gln) + L-glutamine + ATP + H2O = L-glutaminyl-tRNA(Gln) + L-glutamate + ADP + phosphate + H(+). Its function is as follows. Allows the formation of correctly charged Gln-tRNA(Gln) through the transamidation of misacylated Glu-tRNA(Gln) in organisms which lack glutaminyl-tRNA synthetase. The reaction takes place in the presence of glutamine and ATP through an activated gamma-phospho-Glu-tRNA(Gln). In Dehalococcoides mccartyi (strain ATCC BAA-2100 / JCM 16839 / KCTC 5957 / BAV1), this protein is Glutamyl-tRNA(Gln) amidotransferase subunit A.